A 254-amino-acid polypeptide reads, in one-letter code: Alcohol dehydrogenase (254 aa).

10–33 is a binding site for NAD(+); sequence FVAGLGGIGLDTSREIVKSGPKNL. Substrate is bound at residue Ser138. The Proton acceptor role is filled by Tyr151.

The protein belongs to the short-chain dehydrogenases/reductases (SDR) family. In terms of assembly, homodimer.

The catalysed reaction is a primary alcohol + NAD(+) = an aldehyde + NADH + H(+). It catalyses the reaction a secondary alcohol + NAD(+) = a ketone + NADH + H(+). This is Alcohol dehydrogenase (Adh1) from Drosophila lacicola (Fruit fly).